The primary structure comprises 353 residues: Photosystem II D2 protein (353 aa).

T2 carries the post-translational modification N-acetylthreonine. T2 is subject to Phosphothreonine. Residues 41–61 (CAYFALGGWLTGTTFVTSWYT) form a helical membrane-spanning segment. H118 contacts chlorophyll a. Residues 125 to 141 (GFMLRQFEIARSVQLRP) traverse the membrane as a helical segment. Pheophytin a contacts are provided by Q130 and N143. The chain crosses the membrane as a helical span at residues 153–166 (VFVSVFLIYPLGQS). H198 provides a ligand contact to chlorophyll a. The chain crosses the membrane as a helical span at residues 208–228 (AALLCAIHGATVENTIFEDGD). The a plastoquinone site is built by H215 and F262. H215 is a Fe cation binding site. Fe cation is bound at residue H269. The chain crosses the membrane as a helical span at residues 279–295 (GLWMSAVGVVGLAVNLR).

It belongs to the reaction center PufL/M/PsbA/D family. In terms of assembly, PSII is composed of 1 copy each of membrane proteins PsbA, PsbB, PsbC, PsbD, PsbE, PsbF, PsbH, PsbI, PsbJ, PsbK, PsbL, PsbM, PsbT, PsbX, PsbY, PsbZ, Psb30/Ycf12, at least 3 peripheral proteins of the oxygen-evolving complex and a large number of cofactors. It forms dimeric complexes. The cofactor is The D1/D2 heterodimer binds P680, chlorophylls that are the primary electron donor of PSII, and subsequent electron acceptors. It shares a non-heme iron and each subunit binds pheophytin, quinone, additional chlorophylls, carotenoids and lipids. There is also a Cl(-1) ion associated with D1 and D2, which is required for oxygen evolution. The PSII complex binds additional chlorophylls, carotenoids and specific lipids..

The protein resides in the plastid. Its subcellular location is the chloroplast thylakoid membrane. It carries out the reaction 2 a plastoquinone + 4 hnu + 2 H2O = 2 a plastoquinol + O2. In terms of biological role, photosystem II (PSII) is a light-driven water:plastoquinone oxidoreductase that uses light energy to abstract electrons from H(2)O, generating O(2) and a proton gradient subsequently used for ATP formation. It consists of a core antenna complex that captures photons, and an electron transfer chain that converts photonic excitation into a charge separation. The D1/D2 (PsbA/PsbD) reaction center heterodimer binds P680, the primary electron donor of PSII as well as several subsequent electron acceptors. D2 is needed for assembly of a stable PSII complex. This chain is Photosystem II D2 protein, found in Chaetosphaeridium globosum (Charophycean green alga).